A 416-amino-acid polypeptide reads, in one-letter code: Geranyl diphosphate synthase (416 aa).

Residues aspartate 157 and aspartate 161 each contribute to the Mg(2+) site. The short motif at 157 to 161 (DDIMD) is the DDXXD motif element.

It belongs to the FPP/GGPP synthase family. Mg(2+) serves as cofactor. In terms of tissue distribution, specifically expressed in the anterior midgut of male beetles, the site of aggregation pheromone biosynthesis.

The catalysed reaction is isopentenyl diphosphate + dimethylallyl diphosphate = (2E)-geranyl diphosphate + diphosphate. It functions in the pathway pheromone biosynthesis. Functionally, geranyl diphosphate synthase involved in pheromone biosynthesis. The protein is Geranyl diphosphate synthase of Ips pini (Pine engraver beetle).